The sequence spans 156 residues: Ribosomal RNA large subunit methyltransferase H (156 aa).

S-adenosyl-L-methionine contacts are provided by residues L73, G104, and 123–128 (LSALTL).

The protein belongs to the RNA methyltransferase RlmH family. In terms of assembly, homodimer.

The protein resides in the cytoplasm. It catalyses the reaction pseudouridine(1915) in 23S rRNA + S-adenosyl-L-methionine = N(3)-methylpseudouridine(1915) in 23S rRNA + S-adenosyl-L-homocysteine + H(+). In terms of biological role, specifically methylates the pseudouridine at position 1915 (m3Psi1915) in 23S rRNA. The protein is Ribosomal RNA large subunit methyltransferase H of Vibrio parahaemolyticus serotype O3:K6 (strain RIMD 2210633).